We begin with the raw amino-acid sequence, 247 residues long: 14-3-3 protein gamma (247 aa).

Met-1 carries the N-acetylmethionine; in 14-3-3 protein gamma; alternate; partial modification. Val-2 bears the N-acetylvaline; in 14-3-3 protein gamma, N-terminally processed; partial mark. Residue Val-2 is modified to N-acetylvaline; partial. Residues 2 to 166 (VDREQLVQKA…AHEISKEHMQ (165 aa)) are required for interaction with SPATA18/MIEAP (isoform 2) but dispensable for binding to SPATA18/MIEAP (isoform 1). Residues 2–247 (VDREQLVQKA…QDDDGGEGNN (246 aa)) form an interaction with SPATA18/MIEAP region. Residue Ser-71 is modified to Phosphoserine. Tyr-133 carries the phosphotyrosine modification. Residue Thr-145 is modified to Phosphothreonine. Ser-215 bears the Phosphoserine mark. Thr-234 bears the Phosphothreonine mark. The residue at position 235 (Ser-235) is a Phosphoserine.

It belongs to the 14-3-3 family. In terms of assembly, homodimer. Part of a complex that contains DSG3, PKP1, YAP1 and YWHAG; the complex is required for localization of DSG3 and YAP1 to the cell membrane in keratinocytes. Interacts with SAMSN1. Interacts with RAF1, SSH1 and CRTC2/TORC2. Interacts with ABL1 (phosphorylated form); the interaction retains it in the cytoplasm. Interacts with GAB2. Interacts with MDM4 (phosphorylated); negatively regulates MDM4 activity toward TP53. Interacts with PKA-phosphorylated AANAT and SIRT2. Interacts with the 'Thr-369' phosphorylated form of DAPK2. Interacts with PI4KB, TBC1D22A and TBC1D22B. Interacts with SLITRK1. Interacts with LRRK2; this interaction is dependent on LRRK2 phosphorylation. Interacts with MARK2 and MARK3. Interacts with MEFV. Interacts with ENDOG, TSC2 and PIK3C3; interaction with ENDOG weakens its interaction with TSC2 and PIK3C3. Interacts with (phosphorylated) WDR24. Interacts with BEST1; this interaction promotes L-glutamate channel activity leading to the positive regulation of NMDA glutamate receptor activity through the L-glutamate secretion. Interacts with PKP1 (when phosphorylated); the interaction results in translocation of PKP1 to the cytoplasm and loss of intercellular adhesion in keratinocytes. Interacts with SPATA18/MIEAP (isoforms 1 and 2); a protein that also plays a role in MALM. Post-translationally, phosphorylated by various PKC isozymes. As to expression, highly expressed in brain, skeletal muscle, and heart.

The protein localises to the cytoplasm. The protein resides in the cytosol. Its subcellular location is the mitochondrion matrix. Functionally, adapter protein implicated in the regulation of a large spectrum of both general and specialized signaling pathways. Binds to a large number of partners, usually by recognition of a phosphoserine or phosphothreonine motif. Binding generally results in the modulation of the activity of the binding partner. Promotes inactivation of WDR24 component of the GATOR2 complex by binding to phosphorylated WDR24. Participates in the positive regulation of NMDA glutamate receptor activity by promoting the L-glutamate secretion through interaction with BEST1. Reduces keratinocyte intercellular adhesion, via interacting with PKP1 and sequestering it in the cytoplasm, thereby reducing its incorporation into desmosomes. Plays a role in mitochondrial protein catabolic process (also named MALM) that promotes the degradation of damaged proteins inside mitochondria. In Homo sapiens (Human), this protein is 14-3-3 protein gamma.